Reading from the N-terminus, the 70-residue chain is Large ribosomal subunit protein bL31 (70 aa).

4 residues coordinate Zn(2+): cysteine 16, cysteine 18, cysteine 37, and cysteine 40.

This sequence belongs to the bacterial ribosomal protein bL31 family. Type A subfamily. As to quaternary structure, part of the 50S ribosomal subunit. Requires Zn(2+) as cofactor.

Its function is as follows. Binds the 23S rRNA. The sequence is that of Large ribosomal subunit protein bL31 from Haemophilus influenzae (strain 86-028NP).